We begin with the raw amino-acid sequence, 528 residues long: MAPTALLSVSDKSGLLPLAKTLHERYGYQLLSSGGTAKVLQEAGLPVTPVADHTGAPEILGGRVKTLHPRIHGGILARRGDPAHEADLQAQQITPIDVVVVNLYPFRETVSDPAVSWERAIENIDIGGPTMVRSAAKNHDHVAVLTDPDQYDRFLQDLAASGGAVSAAVRRRLALDAFAHTAAYDAAITRWMQNRPELQPADDGSASSLPWLEALPLRQRLRYGENPHQGAAWYSAPKAGWGGAIQLQGKELSTNNLLDLEAALATVREFGYGEGGSHPAQRPAAVVVKHTNPCGVAVADGHAAALTRALDGDRVSAFGGIVAVNGRVDAPAARELTSLFLECVVAPEYAPEAREILASKGNLRLLELPPTAIDAAGHDHVRSILGGLLVQDLDDQPVAADGWTVASERAPSQAERDDLCFAWQLVRHVRSNAIVVARNGQSLGIGAGQMNRVGSARIALEASGDGARGAVLASDGFFPFDDTVRLAAQHGITAVIHPGGSKRDQDSIKACNELGLAMLLTGQRHFLH.

In terms of domain architecture, MGS-like spans 1-146 (MAPTALLSVS…KNHDHVAVLT (146 aa)).

It belongs to the PurH family.

It carries out the reaction (6R)-10-formyltetrahydrofolate + 5-amino-1-(5-phospho-beta-D-ribosyl)imidazole-4-carboxamide = 5-formamido-1-(5-phospho-D-ribosyl)imidazole-4-carboxamide + (6S)-5,6,7,8-tetrahydrofolate. The catalysed reaction is IMP + H2O = 5-formamido-1-(5-phospho-D-ribosyl)imidazole-4-carboxamide. The protein operates within purine metabolism; IMP biosynthesis via de novo pathway; 5-formamido-1-(5-phospho-D-ribosyl)imidazole-4-carboxamide from 5-amino-1-(5-phospho-D-ribosyl)imidazole-4-carboxamide (10-formyl THF route): step 1/1. Its pathway is purine metabolism; IMP biosynthesis via de novo pathway; IMP from 5-formamido-1-(5-phospho-D-ribosyl)imidazole-4-carboxamide: step 1/1. This chain is Bifunctional purine biosynthesis protein PurH, found in Synechococcus sp. (strain WH7803).